The sequence spans 547 residues: Chaperonin GroEL (547 aa).

ATP contacts are provided by residues 30-33 (TLGP), Lys51, 87-91 (DGTTT), Gly415, and Asp496. The segment at 528–547 (KEEPMPMRGSGMGGMGGMDF) is disordered. The segment covering 537–547 (SGMGGMGGMDF) has biased composition (gly residues).

Belongs to the chaperonin (HSP60) family. Forms a cylinder of 14 subunits composed of two heptameric rings stacked back-to-back. Interacts with the co-chaperonin GroES.

It localises to the cytoplasm. The catalysed reaction is ATP + H2O + a folded polypeptide = ADP + phosphate + an unfolded polypeptide.. In terms of biological role, together with its co-chaperonin GroES, plays an essential role in assisting protein folding. The GroEL-GroES system forms a nano-cage that allows encapsulation of the non-native substrate proteins and provides a physical environment optimized to promote and accelerate protein folding. In Rickettsia canadensis (strain McKiel), this protein is Chaperonin GroEL.